We begin with the raw amino-acid sequence, 201 residues long: Holliday junction branch migration complex subunit RuvA (201 aa).

Positions 1–64 (MYEYIRGQFQ…EDFIGLYGFT (64 aa)) are domain I. The tract at residues 65–143 (TREELEMFKL…PDELTSEEGE (79 aa)) is domain II. The flexible linker stretch occupies residues 144–152 (LIEGINDNS). The tract at residues 153-201 (DYSFNINETLSALMALGYTEKEAQKALEKVDKTLSIENMIKESLKLLMR) is domain III.

It belongs to the RuvA family. Homotetramer. Forms an RuvA(8)-RuvB(12)-Holliday junction (HJ) complex. HJ DNA is sandwiched between 2 RuvA tetramers; dsDNA enters through RuvA and exits via RuvB. An RuvB hexamer assembles on each DNA strand where it exits the tetramer. Each RuvB hexamer is contacted by two RuvA subunits (via domain III) on 2 adjacent RuvB subunits; this complex drives branch migration. In the full resolvosome a probable DNA-RuvA(4)-RuvB(12)-RuvC(2) complex forms which resolves the HJ.

Its subcellular location is the cytoplasm. In terms of biological role, the RuvA-RuvB-RuvC complex processes Holliday junction (HJ) DNA during genetic recombination and DNA repair, while the RuvA-RuvB complex plays an important role in the rescue of blocked DNA replication forks via replication fork reversal (RFR). RuvA specifically binds to HJ cruciform DNA, conferring on it an open structure. The RuvB hexamer acts as an ATP-dependent pump, pulling dsDNA into and through the RuvAB complex. HJ branch migration allows RuvC to scan DNA until it finds its consensus sequence, where it cleaves and resolves the cruciform DNA. The polypeptide is Holliday junction branch migration complex subunit RuvA (Clostridium perfringens (strain ATCC 13124 / DSM 756 / JCM 1290 / NCIMB 6125 / NCTC 8237 / Type A)).